Reading from the N-terminus, the 601-residue chain is Glutathione-regulated potassium-efflux system protein KefB (601 aa).

13 helical membrane passes run 4 to 24 (SDFL…VPLA), 29 to 49 (IGAV…GLGF), 55 to 75 (EILH…GLEL), 87 to 107 (IFGV…GLLM), 115 to 135 (AAVV…LQLM), 152 to 172 (VLLF…LLAG), 177 to 197 (HFDW…LIGG), 207 to 227 (FIAA…LVLG), 230 to 250 (LFMD…GVLL), 268 to 288 (GLLL…GVLY), 291 to 311 (LLWV…VLYL), 324 to 344 (MQFA…FSTA), and 356 to 376 (ALLL…MKLV). The 120-residue stretch at 400–519 (KPQVIVVGFG…AGVTQFSRET (120 aa)) folds into the RCK N-terminal domain.

This sequence belongs to the monovalent cation:proton antiporter 2 (CPA2) transporter (TC 2.A.37) family. KefB subfamily. Interacts with the regulatory subunit KefG.

It is found in the cell inner membrane. Functionally, pore-forming subunit of a potassium efflux system that confers protection against electrophiles. Catalyzes K(+)/H(+) antiport. The sequence is that of Glutathione-regulated potassium-efflux system protein KefB from Escherichia coli O139:H28 (strain E24377A / ETEC).